The primary structure comprises 153 residues: Ribonuclease H (153 aa).

The region spanning 4–145 is the RNase H type-1 domain; it reads SVDSVELFTD…ADQLANRGVD (142 aa). 4 residues coordinate Mg(2+): aspartate 13, glutamate 51, aspartate 73, and aspartate 137.

This sequence belongs to the RNase H family. Monomer. It depends on Mg(2+) as a cofactor.

It localises to the cytoplasm. The enzyme catalyses Endonucleolytic cleavage to 5'-phosphomonoester.. Its function is as follows. Endonuclease that specifically degrades the RNA of RNA-DNA hybrids. The sequence is that of Ribonuclease H from Pseudomonas fluorescens (strain Pf0-1).